Consider the following 336-residue polypeptide: Phosphate acyltransferase (336 aa).

It belongs to the PlsX family. As to quaternary structure, homodimer. Probably interacts with PlsY.

Its subcellular location is the cytoplasm. It carries out the reaction a fatty acyl-[ACP] + phosphate = an acyl phosphate + holo-[ACP]. The protein operates within lipid metabolism; phospholipid metabolism. Catalyzes the reversible formation of acyl-phosphate (acyl-PO(4)) from acyl-[acyl-carrier-protein] (acyl-ACP). This enzyme utilizes acyl-ACP as fatty acyl donor, but not acyl-CoA. In Pseudomonas fluorescens (strain ATCC BAA-477 / NRRL B-23932 / Pf-5), this protein is Phosphate acyltransferase.